A 300-amino-acid chain; its full sequence is Fatty acid hydroxylase uhd1 (300 aa).

NADP(+) is bound by residues 14-20 (GANGFVG), arginine 39, 63-64 (DL), 83-85 (VAS), tyrosine 156, lysine 160, 183-186 (PVYI), and serine 199. Residue lysine 160 is the Proton donor of the active site.

This sequence belongs to the NAD(P)-dependent epimerase/dehydratase family. Dihydroflavonol-4-reductase subfamily.

The protein operates within secondary metabolite biosynthesis. Its function is as follows. Fatty acid hydroxylase; part of the gene cluster that mediates the biosynthesis of the glycolipid biosurfactant ustilagic acid (UA). UA is a secreted cellobiose glycolipid that is toxic for many microorganisms and confers biocontrol activity to U.maydis. UA consists of 15,16-dihydroxypalmitic or 2,15,16-trihydroxypalmitic acid, which is O-glycosidically linked to cellobiose at its terminal hydroxyl group. In addition, the cellobiose moiety is acetylated and acylated with a short-chain hydroxy fatty acid. UA biosynthesis starts with omega-hydroxylation of palmitic acid catalyzed by the cytochrome P450 monooxygenase cyp1. Terminal hydroxylation of palmitic acid precedes subterminal hydroxylation catalyzed by the cytochrome P450 monooxygenase cyp2. Sequential glucosylation of the hydroxy fatty acid is probably catalyzed by the glycosyltransferase ugt1. The cellobiose lipid is further decorated by acetylation of the proximal glucose residue and by acylation with a short-chain beta-hydroxy fatty acid at the distal glucose residue. The acyltransferase uat1 may be a good candidate for catalyzing either acetylation or acylation of the cellobiose lipid. The fatty acid synthase fas2 may be involved in synthesis of the carbon backbone of the short-chain beta-hydroxy fatty acid esterified to the cellobiose disaccharide. The secreted UA consists of a mixture of both alpha-hydroxylated and non-hydroxylated glycolipids; therefore, alpha-hydroxylation of the long-chain fatty, catalyzed by the fatty acid hydroxylase ahd1, occurs late in UA biosynthesis and may be the last step before secretion. The protein is Fatty acid hydroxylase uhd1 of Mycosarcoma maydis (Corn smut fungus).